The sequence spans 565 residues: Proline--tRNA ligase (565 aa).

This sequence belongs to the class-II aminoacyl-tRNA synthetase family. ProS type 1 subfamily. In terms of assembly, homodimer.

Its subcellular location is the cytoplasm. The catalysed reaction is tRNA(Pro) + L-proline + ATP = L-prolyl-tRNA(Pro) + AMP + diphosphate. Catalyzes the attachment of proline to tRNA(Pro) in a two-step reaction: proline is first activated by ATP to form Pro-AMP and then transferred to the acceptor end of tRNA(Pro). As ProRS can inadvertently accommodate and process non-cognate amino acids such as alanine and cysteine, to avoid such errors it has two additional distinct editing activities against alanine. One activity is designated as 'pretransfer' editing and involves the tRNA(Pro)-independent hydrolysis of activated Ala-AMP. The other activity is designated 'posttransfer' editing and involves deacylation of mischarged Ala-tRNA(Pro). The misacylated Cys-tRNA(Pro) is not edited by ProRS. This Francisella tularensis subsp. holarctica (strain FTNF002-00 / FTA) protein is Proline--tRNA ligase.